The sequence spans 264 residues: Heavy metal-associated isoprenylated plant protein 17 (264 aa).

2 HMA domains span residues 32 to 95 (VTDA…KKIE) and 133 to 204 (IMEV…KERQ). Residues 185–218 (SRKLNKKMHQKIKKAEKERQEWESEMMLREAEEE) adopt a coiled-coil conformation. Cysteine 261 carries the post-translational modification Cysteine methyl ester. Cysteine 261 carries the S-farnesyl cysteine lipid modification. Residues 262–264 (SIS) constitute a propeptide, removed in mature form.

The protein belongs to the HIPP family.

Probable heavy-metal-binding protein. This chain is Heavy metal-associated isoprenylated plant protein 17, found in Arabidopsis thaliana (Mouse-ear cress).